The primary structure comprises 105 residues: Cell division protein FtsB (105 aa).

Residues 1–3 (MRL) lie on the Cytoplasmic side of the membrane. A helical transmembrane segment spans residues 4 to 21 (FTLILMVVLALVQRQLWF). Residues 22 to 105 (GKNGLVEYRQ…NKQSSLPKSD (84 aa)) lie on the Periplasmic side of the membrane. Residues 28–74 (EYRQVSENLLRRQADNQKLQERNMLLKEDIEDLKSGLEAIEELARND) adopt a coiled-coil conformation.

Belongs to the FtsB family. As to quaternary structure, part of a complex composed of FtsB, FtsL and FtsQ.

The protein resides in the cell inner membrane. Its function is as follows. Essential cell division protein. May link together the upstream cell division proteins, which are predominantly cytoplasmic, with the downstream cell division proteins, which are predominantly periplasmic. In Tolumonas auensis (strain DSM 9187 / NBRC 110442 / TA 4), this protein is Cell division protein FtsB.